The chain runs to 571 residues: Sulfite reductase [NADPH] hemoprotein beta-component (571 aa).

4 residues coordinate [4Fe-4S] cluster: Cys435, Cys441, Cys480, and Cys484. A siroheme-binding site is contributed by Cys484.

Belongs to the nitrite and sulfite reductase 4Fe-4S domain family. In terms of assembly, alpha(8)-beta(8). The alpha component is a flavoprotein, the beta component is a hemoprotein. Siroheme is required as a cofactor. Requires [4Fe-4S] cluster as cofactor.

It carries out the reaction hydrogen sulfide + 3 NADP(+) + 3 H2O = sulfite + 3 NADPH + 4 H(+). The protein operates within sulfur metabolism; hydrogen sulfide biosynthesis; hydrogen sulfide from sulfite (NADPH route): step 1/1. Its function is as follows. Component of the sulfite reductase complex that catalyzes the 6-electron reduction of sulfite to sulfide. This is one of several activities required for the biosynthesis of L-cysteine from sulfate. This chain is Sulfite reductase [NADPH] hemoprotein beta-component, found in Serratia proteamaculans (strain 568).